The chain runs to 401 residues: Deubiquitinase and deneddylase Dub1 (401 aa).

Over residues 1–11 (MLSPTNSTSKT) the composition is skewed to polar residues. A disordered region spans residues 1–24 (MLSPTNSTSKTAPVPPRDSSKPVL). Residues 40-60 (TALAVLLVVVTLGLILLFYSF) form a helical membrane-spanning segment. The disordered stretch occupies residues 77-130 (KEQPTISIPVPLPSPPLAVPRPSTPPPPVISRPSTPSAPKPSTPPPLLPKAPKP). Pro residues predominate over residues 86–128 (VPLPSPPLAVPRPSTPPPPVISRPSTPSAPKPSTPPPLLPKAP). Catalysis depends on residues His275, Asp292, and Cys345.

It belongs to the peptidase C48 family. As to quaternary structure, binds to host NFKBIA.

Its subcellular location is the secreted. The protein localises to the host cell. The protein resides in the membrane. Effector proteins function to alter host cell physiology and promote bacterial survival in host tissues. This protease possesses deubiquitinating and deneddylating activities. Impairs ubiquitination and degradation of NF-kappa-B inhibitor alpha (NFKBIA), thereby preventing NF-kappa-B activation. This chain is Deubiquitinase and deneddylase Dub1 (cdu1), found in Chlamydia trachomatis serovar L2 (strain ATCC VR-902B / DSM 19102 / 434/Bu).